The sequence spans 74 residues: U12-theraphotoxin-Hs1a (74 aa).

An N-terminal signal peptide occupies residues 1–20 (MNVKILLLLVGLNLVMHSNA). A propeptide spanning residues 21–40 (TGDSETNPAETLFIEEIFRR) is cleaved from the precursor. 3 disulfide bridges follow: C42-C56, C49-C61, and C55-C71.

This sequence belongs to the neurotoxin 35 family. Expressed by the venom gland.

Its subcellular location is the secreted. Its function is as follows. Putative ion channel inhibitor. The protein is U12-theraphotoxin-Hs1a of Cyriopagopus schmidti (Chinese bird spider).